An 848-amino-acid polypeptide reads, in one-letter code: Dynein axonemal intermediate chain 4 (848 aa).

Disordered regions lie at residues 345–370 and 431–464; these read SKANVLPKDQDQRLPGSTTEKNSETS and EPEPEEPEDVLESAKHEEVEEESKKEEEEEIHAE. Residues 359 to 370 show a composition bias toward polar residues; that stretch reads PGSTTEKNSETS. A compositionally biased stretch (basic and acidic residues) spans 442-456; it reads ESAKHEEVEEESKKE. 6 WD repeats span residues 534-574, 583-631, 658-698, 702-742, 745-784, and 790-829; these read QSPY…NVPV, KHLG…DCYD, SRQA…QYLD, GHKG…PSLS, PATSVVYDVAWSPKSSYIFAAANENRVEIWDLHISTLDPL, and NPGIKFTTILFAKQTDCLLVGDSDGQVSVYELRNMPTVLE.

In terms of assembly, part of the multisubunit axonemal dynein complex formed at least of two heavy chains and a number of intermediate and light chains. Associated with axonemal dynein subunits such as, DNAH2, DNAI3, and DYNLT1. Interacts with DYNLT1.

The protein localises to the cytoplasm. The protein resides in the cytoskeleton. It localises to the flagellum axoneme. Its subcellular location is the cilium axoneme. It is found in the dynein axonemal particle. Functionally, plays a critical role in the assembly of axonemal dynein complex, thereby playing a role in ciliary motility. The sequence is that of Dynein axonemal intermediate chain 4 from Homo sapiens (Human).